We begin with the raw amino-acid sequence, 155 residues long: Ribosomal RNA large subunit methyltransferase H (155 aa).

S-adenosyl-L-methionine-binding positions include G104 and 123–128 (LGPMTF).

This sequence belongs to the RNA methyltransferase RlmH family. In terms of assembly, homodimer.

The protein resides in the cytoplasm. The enzyme catalyses pseudouridine(1915) in 23S rRNA + S-adenosyl-L-methionine = N(3)-methylpseudouridine(1915) in 23S rRNA + S-adenosyl-L-homocysteine + H(+). In terms of biological role, specifically methylates the pseudouridine at position 1915 (m3Psi1915) in 23S rRNA. This is Ribosomal RNA large subunit methyltransferase H from Nitratidesulfovibrio vulgaris (strain DSM 19637 / Miyazaki F) (Desulfovibrio vulgaris).